Consider the following 454-residue polypeptide: MELSFKREKICSVEVNLDVPSIEVHSHNLPSYIPGYNGFFMTVEYCDGLVVYATENGIGICNPLLRQIRWIKSKVNYRYNGVGYDNSRPENHYKIFESCPYSDTTVKASITEFVSDAWISKPYEFAYDWDFMSSYSVSLNGALYWVAFHMASDDQFIQSFDFSTEKFEPYCLLPNKKCDPSNARSLAVFRGDRFSYLEQNYETRNIEIWVTKKEIKIENGKAVEWMNLMKVSVPKWSSLREKACIYIAKGDKFHEIIINDLVEYPTRHHRTYVPSLVPVPTFTMSNRSKTQQVESRFTPPRGIQASDGGNEWDDGIFHNVKKINVGVNDFDTVFVKFHYSKYNRIEAGAGHGNATTHNPDDEIMIAGGDYIEAVEGTYTESHITSITFRMRKGDMMPQYGRLNGTPFSLRGERGSKAIGFYGRSSGVHLTALGVHFSPPPLYYSFPNHSPVFNY.

Positions 295 to 438 constitute a Jacalin-type lectin domain; the sequence is SRFTPPRGIQ…LTALGVHFSP (144 aa).

It belongs to the jacalin lectin family.

This Arabidopsis thaliana (Mouse-ear cress) protein is Jacalin-related lectin 37 (JAL37).